Here is a 417-residue protein sequence, read N- to C-terminus: Gamma-glutamyl phosphate reductase (417 aa).

The protein belongs to the gamma-glutamyl phosphate reductase family.

The protein resides in the cytoplasm. It carries out the reaction L-glutamate 5-semialdehyde + phosphate + NADP(+) = L-glutamyl 5-phosphate + NADPH + H(+). The protein operates within amino-acid biosynthesis; L-proline biosynthesis; L-glutamate 5-semialdehyde from L-glutamate: step 2/2. Functionally, catalyzes the NADPH-dependent reduction of L-glutamate 5-phosphate into L-glutamate 5-semialdehyde and phosphate. The product spontaneously undergoes cyclization to form 1-pyrroline-5-carboxylate. This Shigella boydii serotype 18 (strain CDC 3083-94 / BS512) protein is Gamma-glutamyl phosphate reductase.